A 227-amino-acid chain; its full sequence is DNA repair protein RecO (227 aa).

Belongs to the RecO family.

Functionally, involved in DNA repair and RecF pathway recombination. The sequence is that of DNA repair protein RecO from Pseudomonas putida (strain GB-1).